Reading from the N-terminus, the 706-residue chain is F-box/WD repeat-containing protein 7 (706 aa).

A disordered region spans residues 1–157 (MNQELLSVGS…IVDLPIHQRS (157 aa)). Residue S26 is modified to Phosphoserine. Residues 32–54 (QMNRVLEEEQQQPRHQEEEHAAR) show a composition bias toward basic and acidic residues. A compositionally biased stretch (polar residues) spans 69 to 83 (NDPQQGQLEENNNRF). Acidic residues predominate over residues 86-128 (VDEDSSGNQEEQEEDEEHAGEQDEEDEEEEEMDQESDDFDQSD). Residues 129-138 (DSSREDEHTH) show a composition bias toward basic and acidic residues. At T204 the chain carries Phosphothreonine. S226 carries the post-translational modification Phosphoserine. The region spanning 277–323 (RDFISLLPKELALYVLSFLEPKDLLQAAQTCRYWRILAEDNLLWREK) is the F-box domain. WD repeat units lie at residues 377–417 (GHDD…RTLV), 419–455 (HTGGVWSSQMRDNIIISGSTDRTLKVWNAETGECIHT), 458–497 (GHTSTVRCMHLHEKRVVSGSRDATLRVWDIETGQCLHVLM), 499–535 (HVAAVRCVQYDGRRVVSGAYDFMVKVWDPETETCLHT), 538–577 (GHTNRVYSLQFDGIHVVSGSLDTSIRVWDVETGNCIHTLT), 579–617 (HQSLTSGMELKDNILVSGNADSTVKIWDIKTGQCLQTLQ), and 621–658 (KHQSAVTCLQFNKNFVITSSDDGTVKLWDLKTGEFIRN).

Homodimer; homodimerization plays a role in substrate binding and/or ubiquitination and degradation. Component of the SCF(FBXW7) complex consisting of CUL1, RBX1, SKP1 and FBXW7. Interacts (via F-box domain) with SKP1. Interacts (via F-box domain) with pseudophosphatase STYX; the interaction is direct and prevents FBXW7 interaction with SKP1. Interacts with cyclin-E (CCNE1 or CCNE2). Interacts with PSEN1. Forms a trimeric complex with NOTCH1 and SGK1. Interacts with NOTCH1 intracellular domain/NICD and NOTCH4 intracellular domain/NICD. Interacts with NOTCH2 intracellular domain (N2ICD). Interacts with MYC (when phosphorylated). Interacts with USP28, counteracting ubiquitination of MYC. Interacts with JUN. Found in a complex with JUN and PRR7. Interacts with JUN and PRR7; the interaction inhibits ubiquitination-mediated JUN degradation, promoting its phosphorylation and transcriptional activity. Interacts (when phosphorylated at Thr-204) with PIN1, disrupting FBXW7 dimerization and promoting FBXW7 autoubiquitination and degradation. Interacts with UBE2QL1. Interacts with FAM83D; promotes FBXW7 degradation. Interacts with MYCN; FBXW7 competes with AURKA for binding to unphosphorylated MYCN but not for binding to phosphorylated MYCN. Interacts with STOML1. Interacts with NFE2L1. Interacts with USP36, counteracting ubiquitination of MYC. Interacts with RICTOR; mediates RICTOR ubiquitination and degradation.l Interacts with USP38, counteracting ubiquitination of MYC. In terms of assembly, (Microbial infection) In case of infection, interacts with T.annulata PIN1 (TaPIN1); leading to FBXW7 autoubiquitination and subsequent degradation: FBXW7 degradation promotes stabilization of JUN, which promotes cell transformation. Post-translationally, phosphorylation at Thr-204 promotes interaction with PIN1, leading to disrupt FBXW7 dimerization and promoting FBXW7 autoubiquitination and degradation. Phosphorylated by ATM at Ser-26 in response to DNA damage, promoting recruitment to DNA damage sites and 'Lys-63'-linked ubiquitination of phosphorylated XRCC4. Ubiquitinated: autoubiquitinates following phosphorylation at Thr-204 and subsequent interaction with PIN1. Ubiquitination leads to its degradation.

It localises to the nucleus. The protein resides in the nucleoplasm. It is found in the chromosome. The protein operates within protein modification; protein ubiquitination. Functionally, substrate recognition component of a SCF (SKP1-CUL1-F-box protein) E3 ubiquitin-protein ligase complex which mediates the ubiquitination and subsequent proteasomal degradation of target proteins. Recognizes and binds phosphorylated sites/phosphodegrons within target proteins and thereafter brings them to the SCF complex for ubiquitination. Identified substrates include cyclin-E (CCNE1 or CCNE2), DISC1, JUN, MYC, NOTCH1 released notch intracellular domain (NICD), NOTCH2, MCL1, MLST8, RICTOR, and probably PSEN1. Acts as a negative regulator of JNK signaling by binding to phosphorylated JUN and promoting its ubiquitination and subsequent degradation. SCF(FBXW7) complex mediates the ubiquitination and subsequent degradation of NFE2L1. Involved in bone homeostasis and negative regulation of osteoclast differentiation. Also able to promote 'Lys-63'-linked ubiquitination in response to DNA damage. The SCF(FBXW7) complex facilitates double-strand break repair following phosphorylation by ATM: phosphorylation promotes localization to sites of double-strand breaks and 'Lys-63'-linked ubiquitination of phosphorylated XRCC4, enhancing DNA non-homologous end joining. The sequence is that of F-box/WD repeat-containing protein 7 from Bos taurus (Bovine).